The chain runs to 430 residues: MDLLSDIEKQLQKATAQAFLIALSGGLDSTVLLSLFAKLCQKQPHLPPLSIRAIHIHHGLSPNADSWAKHCQDLCDQFQIPLIIERVQVDKTNGIEAGAREARYQAIKKYLQTQEMLVTAHHLNDQTETFFLALKRGSGLKGLGAMQQQSVLFGMPILRPLLGFTRTQLENYAQKEKLNWITDESNEDNRYDRNFLRNEILPELRERWAHFDLAVQRSAQHCFEQQQLINDLLSEIFTEHCQIKNQFKLCQFRQYSLAKQTALLRMWLAENQLEMPSKRQLTQLINDVIFAKEEANPQFQLVNKVIRRYQDSLYLTKPFSDLTKCTLKLEQNTLNLPDDLGNLTVQENEHNLIFYWQDYSVTLEKTNLPISIRFGYSGKVKHYPKRPREDIKKIWQELGVPPWERNRIPLIFYGNELKSAVGFFRVLKSS.

An ATP-binding site is contributed by 24–29; sequence SGGLDS.

The protein belongs to the tRNA(Ile)-lysidine synthase family.

Its subcellular location is the cytoplasm. It catalyses the reaction cytidine(34) in tRNA(Ile2) + L-lysine + ATP = lysidine(34) in tRNA(Ile2) + AMP + diphosphate + H(+). Functionally, ligates lysine onto the cytidine present at position 34 of the AUA codon-specific tRNA(Ile) that contains the anticodon CAU, in an ATP-dependent manner. Cytidine is converted to lysidine, thus changing the amino acid specificity of the tRNA from methionine to isoleucine. The sequence is that of tRNA(Ile)-lysidine synthase from Haemophilus influenzae (strain ATCC 51907 / DSM 11121 / KW20 / Rd).